The chain runs to 399 residues: MKVFFSIFTLVLFQGTLGADTQGYKWKQLLYNNVTPGSYNPDNMISTAFAYDAEGEKLFLAVPRKLPRVPYTLAEVDTKNSLGVKGKHSPLLNKFSGHKTGKELTSIYQPVIDDCRRLWVVDIGSVEYRSRGAKDYPSHRPAIVAYDLKQPNYPEVVRYYFPTRLVEKPTYFGGFAVDVANPKGDCSETFVYITNFLRGALFIYDHKKQDSWNVTHPTFKAERPTKFDYGGKEYEFKAGIFGITLGDRDSEGNRPAYYLAGSAIKVYSVNTKELKQKGGKLNPELLGNRGKYNDAIALAYDPKTKVIFFAEANTKQVSCWNTQKMPLRMKNTDVVYTSSRFVFGTDISVDSKGGLWFMSNGFPPIRKSEKFKYDFPRYRLMRIMDTQEAIAGTACDMNA.

Residues Met-1–Gly-18 form the signal peptide. Cysteines 115 and 186 form a disulfide. Asn-213 is a glycosylation site (N-linked (GlcNAc...) asparagine). The cysteines at positions 319 and 395 are disulfide-linked. 3 residues coordinate serotonin: Thr-345, Asn-360, and Phe-362.

It belongs to the major royal jelly protein family. Salivary gland (at protein level).

It is found in the secreted. Probably modulates blood feeding of sand flies on vertebrate species by binding and sequestering different mediators involved in the host response. Binds biogenic amines. Binds serotonin with high affinity. Binds adrenaline and noradrenaline. Binds dopamine and octopamine. Poorly binds histamine. Induces a delayed type hypersensitivity response in host tissues. Induces systemic Th1 immune response in the host. Immunogenic; elicits antibody production in the host. Functions as a chemoattractant for host neutrophils; likely acts through a G-protein-coupled receptor and effect is dependent on calcium influx. Its function is as follows. (Microbial infection) Modulates infection caused by Leishmania species in the host. The protein is Yellow-related salivary protein LJM11 of Lutzomyia longipalpis (Sand fly).